Reading from the N-terminus, the 436-residue chain is Phosphomethylpyrimidine synthase (436 aa).

Substrate contacts are provided by residues Asn69, Met98, Tyr127, His163, 185–187 (SRG), 226–229 (DACR), and Glu265. Position 269 (His269) interacts with Zn(2+). Tyr292 is a binding site for substrate. His333 serves as a coordination point for Zn(2+). Cys409, Cys412, and Cys416 together coordinate [4Fe-4S] cluster.

This sequence belongs to the ThiC family. Requires [4Fe-4S] cluster as cofactor.

The catalysed reaction is 5-amino-1-(5-phospho-beta-D-ribosyl)imidazole + S-adenosyl-L-methionine = 4-amino-2-methyl-5-(phosphooxymethyl)pyrimidine + CO + 5'-deoxyadenosine + formate + L-methionine + 3 H(+). The protein operates within cofactor biosynthesis; thiamine diphosphate biosynthesis. Functionally, catalyzes the synthesis of the hydroxymethylpyrimidine phosphate (HMP-P) moiety of thiamine from aminoimidazole ribotide (AIR) in a radical S-adenosyl-L-methionine (SAM)-dependent reaction. This is Phosphomethylpyrimidine synthase from Clostridium acetobutylicum (strain ATCC 824 / DSM 792 / JCM 1419 / IAM 19013 / LMG 5710 / NBRC 13948 / NRRL B-527 / VKM B-1787 / 2291 / W).